Consider the following 319-residue polypeptide: MNSKIIGTGGYLPVTVRSNDDLEKMVDTSDEWITTRTGIKERRIANQQETIAFMGKEAALQALEAANLTAEDLDLIIVGTTSNHNAFPSAACEIQNLLGIYDIPAFDISAACAGFTYALSAADNFIKAGSAKKVLVIGADTLAATCDSTDRSTIILFGDGAGAVVISATEDEGILSTHINADGRFGELLKLPNPQRGNAQTVHEAYLSMSGNDVFKVAVKKLSQVVVDTLAANNIEKEQLDWLVPHQANKRIITATAKKLGMSMDQVILTLENQGNTSAASVPLALDEGVRSGKIKPGQLILLEAFGGGFTWGSALVRM.

Catalysis depends on residues C112 and H246. Positions 247-251 (QANKR) are ACP-binding. The active site involves N276.

This sequence belongs to the thiolase-like superfamily. FabH family. In terms of assembly, homodimer.

The protein resides in the cytoplasm. The enzyme catalyses malonyl-[ACP] + acetyl-CoA + H(+) = 3-oxobutanoyl-[ACP] + CO2 + CoA. It participates in lipid metabolism; fatty acid biosynthesis. Functionally, catalyzes the condensation reaction of fatty acid synthesis by the addition to an acyl acceptor of two carbons from malonyl-ACP. Catalyzes the first condensation reaction which initiates fatty acid synthesis and may therefore play a role in governing the total rate of fatty acid production. Possesses both acetoacetyl-ACP synthase and acetyl transacylase activities. Its substrate specificity determines the biosynthesis of branched-chain and/or straight-chain of fatty acids. This is Beta-ketoacyl-[acyl-carrier-protein] synthase III from Psychromonas ingrahamii (strain DSM 17664 / CCUG 51855 / 37).